The following is a 312-amino-acid chain: Protein atonal (312 aa).

Disordered regions lie at residues 136-174 and 220-248; these read SNVG…TAAA and NDGS…GKQI. The segment covering 162–174 has biased composition (low complexity); the sequence is PSTTATSTPTAAA. The bHLH domain occupies 255-307; that stretch reads KRRLAANARERRRMQNLNQAFDRLRQYLPCLGNDRQLSKHETLQMAQTYISAL.

Efficient DNA binding requires dimerization with another bHLH protein. Forms a heterodimer with Daughterless. Proneural clusters and sense organ precursors of the chordotonal organs, optic furrow of the eye-antennal disk and developing brain lobe.

Its subcellular location is the nucleus. Functionally, developmental protein involved in neurogenesis. Required for the formation of chordotonal organs and photoreceptors. Seems to bind to E boxes. Specifically required for the photoreceptor R8 selection. In Drosophila melanogaster (Fruit fly), this protein is Protein atonal (ato).